The chain runs to 41 residues: Photosystem II reaction center protein Y (41 aa).

Residues isoleucine 7–isoleucine 25 form a helical membrane-spanning segment.

Belongs to the PsbY family. PSII is composed of 1 copy each of membrane proteins PsbA, PsbB, PsbC, PsbD, PsbE, PsbF, PsbH, PsbI, PsbJ, PsbK, PsbL, PsbM, PsbT, PsbX, PsbY, PsbZ, Psb30/Ycf12, peripheral proteins PsbO, CyanoQ (PsbQ), PsbU, PsbV and a large number of cofactors. It forms dimeric complexes.

It is found in the cellular thylakoid membrane. Functionally, loosely associated component of the core of photosystem II (PSII), it is not always seen in crystals. PSII is a light-driven water plastoquinone oxidoreductase, using light energy to abstract electrons from H(2)O, generating a proton gradient subsequently used for ATP formation. The sequence is that of Photosystem II reaction center protein Y from Nostoc punctiforme (strain ATCC 29133 / PCC 73102).